Consider the following 248-residue polypeptide: NLP effector protein Pc121494 (248 aa).

Residues 1–19 (MKFIAVLIAAIASLSAVQA) form the signal peptide. The Hepta-peptide GHRHDWE motif motif lies at 124–130 (GHRNGWE). Asparagine 143 carries an N-linked (GlcNAc...) asparagine glycan.

The protein belongs to the Necrosis inducing protein (NPP1) family.

It is found in the secreted. Secreted effector that contributes strongly to virulence during infection by P.capsici. The sequence is that of NLP effector protein Pc121494 from Phytophthora capsici.